Consider the following 1335-residue polypeptide: Bifunctional autolysin (1335 aa).

The signal sequence occupies residues 1–29 (MAKKFNYKLPSMVALTLFGTAFTAHQANA). Disordered stretches follow at residues 51–88 (QAEK…QSTT), 100–262 (NEIS…KYKE), and 514–535 (WGTT…NNKL). Polar residues-rich tracts occupy residues 58–88 (EVTQ…QSTT), 100–127 (NEIS…VTKN), 143–155 (TDTN…QSVA), 176–223 (TASQ…NASG), and 244–258 (SLNN…TTSY). The interval 303-863 (VSSQKTSSLP…LSTQSTPAPK (561 aa)) is N-acetylmuramoyl-L-alanine amidase. A compositionally biased stretch (low complexity) spans 515–531 (GTTSTKPSQPSKPSGGT). 7 GW domains span residues 533-610 (NKLT…YNTA), 612-686 (APVK…TASK), 700-774 (TVTN…YNTA), 776-850 (SPVK…APSK), 868-943 (STQT…TQNI), 945-1020 (KQTQ…QNST), and 1023-1096 (QSTP…KEKI). An endo-beta-N-acetylglucosaminidase region spans residues 864-1335 (QVKPSTQTVN…GKYFEIPIYK (472 aa)).

This sequence in the N-terminal section; belongs to the N-acetylmuramoyl-L-alanine amidase 2 family. In the C-terminal section; belongs to the glycosyl hydrolase 73 family. In terms of assembly, oligomer; forms a ring structure at the cell surface which is important for efficient partitioning of daughter cells after cell division. In terms of processing, undergoes proteolytic processing to generate the two extracellular lytic enzymes, probably at the septal region on the cell surface.

Its subcellular location is the secreted. It carries out the reaction Hydrolyzes the link between N-acetylmuramoyl residues and L-amino acid residues in certain cell-wall glycopeptides.. The catalysed reaction is an N(4)-(oligosaccharide-(1-&gt;3)-[oligosaccharide-(1-&gt;6)]-beta-D-Man-(1-&gt;4)-beta-D-GlcNAc-(1-&gt;4)-alpha-D-GlcNAc)-L-asparaginyl-[protein] + H2O = an oligosaccharide-(1-&gt;3)-[oligosaccharide-(1-&gt;6)]-beta-D-Man-(1-&gt;4)-D-GlcNAc + N(4)-(N-acetyl-beta-D-glucosaminyl)-L-asparaginyl-[protein]. Functionally, endohydrolysis of the di-N-acetylchitobiosyl unit in high-mannose glycopeptides and glycoproteins containing the -[(Man)5(GlcNAc)2]-Asn structure. One N-acetyl-D-glucosamine residue remains attached to the protein; the rest of the oligosaccharide is released intact. Cleaves the peptidoglycan connecting the daughter cells at the end of the cell division cycle, resulting in the separation of the two newly divided cells. Acts as an autolysin in penicillin-induced lysis. In Staphylococcus epidermidis (strain ATCC 12228 / FDA PCI 1200), this protein is Bifunctional autolysin (atl).